We begin with the raw amino-acid sequence, 321 residues long: tRNA(Ile)-lysidine synthase (321 aa).

Residue 20 to 25 (SGGADS) participates in ATP binding.

This sequence belongs to the tRNA(Ile)-lysidine synthase family.

The protein resides in the cytoplasm. It carries out the reaction cytidine(34) in tRNA(Ile2) + L-lysine + ATP = lysidine(34) in tRNA(Ile2) + AMP + diphosphate + H(+). In terms of biological role, ligates lysine onto the cytidine present at position 34 of the AUA codon-specific tRNA(Ile) that contains the anticodon CAU, in an ATP-dependent manner. Cytidine is converted to lysidine, thus changing the amino acid specificity of the tRNA from methionine to isoleucine. The sequence is that of tRNA(Ile)-lysidine synthase from Bordetella pertussis (strain Tohama I / ATCC BAA-589 / NCTC 13251).